The sequence spans 125 residues: Large ribosomal subunit protein bL12 (125 aa).

It belongs to the bacterial ribosomal protein bL12 family. In terms of assembly, homodimer. Part of the ribosomal stalk of the 50S ribosomal subunit. Forms a multimeric L10(L12)X complex, where L10 forms an elongated spine to which 2 to 4 L12 dimers bind in a sequential fashion. Binds GTP-bound translation factors.

Functionally, forms part of the ribosomal stalk which helps the ribosome interact with GTP-bound translation factors. Is thus essential for accurate translation. The polypeptide is Large ribosomal subunit protein bL12 (Granulibacter bethesdensis (strain ATCC BAA-1260 / CGDNIH1)).